The primary structure comprises 479 residues: Ribulose bisphosphate carboxylase large chain (479 aa).

The propeptide occupies 1 to 2 (MS). Substrate contacts are provided by asparagine 123 and threonine 173. Residue lysine 175 is the Proton acceptor of the active site. A substrate-binding site is contributed by lysine 177. Residues lysine 201, aspartate 203, and glutamate 204 each coordinate Mg(2+). Lysine 201 bears the N6-carboxylysine mark. Phosphoserine is present on serine 208. Histidine 294 serves as the catalytic Proton acceptor. Positions 295 and 327 each coordinate substrate. Threonine 330 bears the Phosphothreonine mark. Serine 379 lines the substrate pocket.

Belongs to the RuBisCO large chain family. Type I subfamily. In terms of assembly, heterohexadecamer of 8 large chains and 8 small chains; disulfide-linked. The disulfide link is formed within the large subunit homodimers. The cofactor is Mg(2+). Post-translationally, the disulfide bond which can form in the large chain dimeric partners within the hexadecamer appears to be associated with oxidative stress and protein turnover.

It is found in the plastid. It localises to the chloroplast. The enzyme catalyses 2 (2R)-3-phosphoglycerate + 2 H(+) = D-ribulose 1,5-bisphosphate + CO2 + H2O. The catalysed reaction is D-ribulose 1,5-bisphosphate + O2 = 2-phosphoglycolate + (2R)-3-phosphoglycerate + 2 H(+). Its function is as follows. RuBisCO catalyzes two reactions: the carboxylation of D-ribulose 1,5-bisphosphate, the primary event in carbon dioxide fixation, as well as the oxidative fragmentation of the pentose substrate in the photorespiration process. Both reactions occur simultaneously and in competition at the same active site. The chain is Ribulose bisphosphate carboxylase large chain from Lobularia maritima (Sweet alyssum).